The chain runs to 263 residues: tRNA dimethylallyltransferase (263 aa).

The protein belongs to the IPP transferase family. In terms of assembly, monomer. Mg(2+) is required as a cofactor.

It catalyses the reaction adenosine(37) in tRNA + dimethylallyl diphosphate = N(6)-dimethylallyladenosine(37) in tRNA + diphosphate. Functionally, catalyzes the transfer of a dimethylallyl group onto the adenine at position 37 in tRNAs that read codons beginning with uridine, leading to the formation of N6-(dimethylallyl)adenosine (i(6)A). This Leifsonia xyli subsp. xyli (strain CTCB07) protein is tRNA dimethylallyltransferase.